The following is a 331-amino-acid chain: Beta-ketoacyl-[acyl-carrier-protein] synthase III (331 aa).

Residues C115 and H255 contribute to the active site. The segment at 256–260 is ACP-binding; it reads QANFR. N285 is a catalytic residue.

Belongs to the thiolase-like superfamily. FabH family. In terms of assembly, homodimer.

It is found in the cytoplasm. The catalysed reaction is malonyl-[ACP] + acetyl-CoA + H(+) = 3-oxobutanoyl-[ACP] + CO2 + CoA. Its pathway is lipid metabolism; fatty acid biosynthesis. Catalyzes the condensation reaction of fatty acid synthesis by the addition to an acyl acceptor of two carbons from malonyl-ACP. Catalyzes the first condensation reaction which initiates fatty acid synthesis and may therefore play a role in governing the total rate of fatty acid production. Possesses both acetoacetyl-ACP synthase and acetyl transacylase activities. Its substrate specificity determines the biosynthesis of branched-chain and/or straight-chain of fatty acids. This Helicobacter pylori (strain ATCC 700392 / 26695) (Campylobacter pylori) protein is Beta-ketoacyl-[acyl-carrier-protein] synthase III.